We begin with the raw amino-acid sequence, 227 residues long: Germin-like protein 3-3 (227 aa).

An N-terminal signal peptide occupies residues 1-26; it reads MECFKTTLAGVVLVVLLLQQAPVLRA. Cys-36 and Cys-51 are oxidised to a cystine. In terms of domain architecture, Cupin type-1 spans 65–217; that stretch reads SRLATGGDVN…ALRVDAGVVE (153 aa). N-linked (GlcNAc...) asparagine glycans are attached at residues Asn-78 and Asn-81. Residues His-114, His-116, Glu-121, and His-163 each contribute to the Mn(2+) site.

It belongs to the germin family. As to quaternary structure, oligomer (believed to be a pentamer but probably hexamer).

The protein resides in the secreted. It is found in the extracellular space. The protein localises to the apoplast. In terms of biological role, may play a role in plant defense. Probably has no oxalate oxidase activity even if the active site is conserved. This is Germin-like protein 3-3 from Oryza sativa subsp. japonica (Rice).